A 246-amino-acid chain; its full sequence is Dihydroorotate dehydrogenase B (NAD(+)), electron transfer subunit (246 aa).

The FAD-binding FR-type domain maps to 3 to 95; sequence MEYFKGKVKE…IGPLGNGFDI (93 aa). FAD-binding positions include 48–51 and 70–71; these read RPIS and GT. The [2Fe-2S] cluster site is built by C213, C218, C221, and C233.

The protein belongs to the PyrK family. In terms of assembly, heterotetramer of 2 PyrK and 2 PyrD type B subunits. [2Fe-2S] cluster serves as cofactor. It depends on FAD as a cofactor.

It participates in pyrimidine metabolism; UMP biosynthesis via de novo pathway; orotate from (S)-dihydroorotate (NAD(+) route): step 1/1. In terms of biological role, responsible for channeling the electrons from the oxidation of dihydroorotate from the FMN redox center in the PyrD type B subunit to the ultimate electron acceptor NAD(+). The chain is Dihydroorotate dehydrogenase B (NAD(+)), electron transfer subunit from Clostridium perfringens (strain 13 / Type A).